Reading from the N-terminus, the 427-residue chain is Peptidase B (427 aa).

Lysine 195 and aspartate 200 together coordinate Mn(2+). Lysine 207 is an active-site residue. Residues aspartate 218, aspartate 277, and glutamate 279 each coordinate Mn(2+). Arginine 281 is an active-site residue.

The protein belongs to the peptidase M17 family. In terms of assembly, homohexamer. It depends on Mn(2+) as a cofactor.

It localises to the cytoplasm. It catalyses the reaction Release of an N-terminal amino acid, Xaa, from a peptide or arylamide. Xaa is preferably Glu or Asp but may be other amino acids, including Leu, Met, His, Cys and Gln.. Functionally, probably plays an important role in intracellular peptide degradation. This chain is Peptidase B, found in Escherichia coli (strain SE11).